The following is a 383-amino-acid chain: Na(+)/H(+) antiporter NhaA (383 aa).

A run of 11 helical transmembrane segments spans residues 14–34, 47–67, 87–107, 117–137, 146–166, 171–191, 205–225, 252–272, 280–300, 321–341, and 356–376; these read AGGI…NSPL, FGMS…FLLI, IFPA…YVAF, GWAI…ALLG, VFLL…IALF, LSTM…MLNA, AILW…GVVI, VAFG…LEGV, MLPL…IFTF, IFAV…ISSL, and LGIL…LHFS.

This sequence belongs to the NhaA Na(+)/H(+) (TC 2.A.33) antiporter family.

The protein localises to the cell inner membrane. It catalyses the reaction Na(+)(in) + 2 H(+)(out) = Na(+)(out) + 2 H(+)(in). Functionally, na(+)/H(+) antiporter that extrudes sodium in exchange for external protons. The chain is Na(+)/H(+) antiporter NhaA from Vibrio alginolyticus.